An 86-amino-acid chain; its full sequence is Large ribosomal subunit protein bL31B (86 aa).

The protein belongs to the bacterial ribosomal protein bL31 family. Type B subfamily. In terms of assembly, part of the 50S ribosomal subunit.

This chain is Large ribosomal subunit protein bL31B, found in Streptococcus equi subsp. equi (strain 4047).